Reading from the N-terminus, the 249-residue chain is Exosome complex component Rrp41 (249 aa).

It belongs to the RNase PH family. Rrp41 subfamily. Component of the archaeal exosome complex. Forms a hexameric ring-like arrangement composed of 3 Rrp41-Rrp42 heterodimers. The hexameric ring associates with a trimer of Rrp4 and/or Csl4 subunits.

The protein localises to the cytoplasm. Its function is as follows. Catalytic component of the exosome, which is a complex involved in RNA degradation. Has 3'-&gt;5' exoribonuclease activity. Can also synthesize heteromeric RNA-tails. This chain is Exosome complex component Rrp41, found in Pyrococcus abyssi (strain GE5 / Orsay).